An 89-amino-acid chain; its full sequence is Small ribosomal subunit protein uS19 (89 aa).

It belongs to the universal ribosomal protein uS19 family.

Functionally, protein S19 forms a complex with S13 that binds strongly to the 16S ribosomal RNA. The sequence is that of Small ribosomal subunit protein uS19 from Xylella fastidiosa (strain M12).